We begin with the raw amino-acid sequence, 363 residues long: tRNA/tmRNA (uracil-C(5))-methyltransferase (363 aa).

Residues glutamine 187, tyrosine 215, asparagine 220, glutamate 236, and aspartate 296 each coordinate S-adenosyl-L-methionine. Residue cysteine 321 is the Nucleophile of the active site. Glutamate 355 functions as the Proton acceptor in the catalytic mechanism.

The protein belongs to the class I-like SAM-binding methyltransferase superfamily. RNA M5U methyltransferase family. TrmA subfamily.

It carries out the reaction uridine(54) in tRNA + S-adenosyl-L-methionine = 5-methyluridine(54) in tRNA + S-adenosyl-L-homocysteine + H(+). It catalyses the reaction uridine(341) in tmRNA + S-adenosyl-L-methionine = 5-methyluridine(341) in tmRNA + S-adenosyl-L-homocysteine + H(+). Dual-specificity methyltransferase that catalyzes the formation of 5-methyluridine at position 54 (m5U54) in all tRNAs, and that of position 341 (m5U341) in tmRNA (transfer-mRNA). The chain is tRNA/tmRNA (uracil-C(5))-methyltransferase from Haemophilus influenzae (strain 86-028NP).